The following is a 227-amino-acid chain: Cytidylate kinase (227 aa).

10-18 (GPASSGKST) contributes to the ATP binding site.

It belongs to the cytidylate kinase family. Type 1 subfamily.

Its subcellular location is the cytoplasm. It carries out the reaction CMP + ATP = CDP + ADP. The enzyme catalyses dCMP + ATP = dCDP + ADP. In Streptococcus mutans serotype c (strain ATCC 700610 / UA159), this protein is Cytidylate kinase.